The sequence spans 196 residues: Putative 3-methyladenine DNA glycosylase (196 aa).

Belongs to the DNA glycosylase MPG family.

The polypeptide is Putative 3-methyladenine DNA glycosylase (Chlamydia pneumoniae (Chlamydophila pneumoniae)).